Consider the following 646-residue polypeptide: P-selectin (646 aa).

The first 41 residues, 1–41 (MASCPKAIWNWRFQRAVFRTVQLLCFSVLIFEVINQKEVSA), serve as a signal peptide directing secretion. Residues 42–587 (WTYHYSNKTY…QAGPLTIQET (546 aa)) lie on the Extracellular side of the membrane. N-linked (GlcNAc...) asparagine glycosylation is found at asparagine 48, asparagine 54, and asparagine 80. The 101-residue stretch at 58–158 (AFCQKYYTDL…PCWKRKRALC (101 aa)) folds into the C-type lectin domain. 17 disulfide bridges follow: cysteine 60–cysteine 158, cysteine 131–cysteine 150, cysteine 163–cysteine 174, cysteine 168–cysteine 183, cysteine 185–cysteine 194, cysteine 200–cysteine 244, cysteine 230–cysteine 257, cysteine 262–cysteine 306, cysteine 292–cysteine 319, cysteine 324–cysteine 368, cysteine 354–cysteine 381, cysteine 386–cysteine 430, cysteine 416–cysteine 443, cysteine 458–cysteine 502, cysteine 488–cysteine 515, cysteine 520–cysteine 564, and cysteine 550–cysteine 577. Positions 121, 123, and 124 each coordinate Ca(2+). Asparagine 123 contacts a carbohydrate. Positions 133 and 146 each coordinate a carbohydrate. Ca(2+)-binding residues include asparagine 146 and aspartate 147. One can recognise an EGF-like domain in the interval 159–195 (YRASCQDMSCSKQGECIETIGNYTCSCYPGFYGPECE). Asparagine 180 carries an N-linked (GlcNAc...) asparagine glycan. Sushi domains follow at residues 198-259 (RECG…QCVA), 260-321 (VQCP…VCKA), 322-383 (LQCQ…ECQA), 384-445 (VTCA…TCEE), 456-517 (VQCP…TCRA), and 518-579 (VKCA…TCQA). Asparagine 212 and asparagine 219 each carry an N-linked (GlcNAc...) asparagine glycan. N-linked (GlcNAc...) asparagine glycosylation occurs at asparagine 336. N-linked (GlcNAc...) asparagine glycosylation occurs at asparagine 481. Asparagine 532, asparagine 539, and asparagine 557 each carry an N-linked (GlcNAc...) asparagine glycan. A helical transmembrane segment spans residues 588–611 (LTYVGGAAAGTTGLVTGSILLALL). Over 612–646 (RRRCRQKDDGKSPLNPQSHLGTYGVFTNAAFDPSP) the chain is Cytoplasmic. The Endocytosis signal motif lies at 634 to 637 (YGVF). An interaction with SNX17 region spans residues 637–646 (FTNAAFDPSP).

It belongs to the selectin/LECAM family. Interacts with SNX17. Interacts with SELPLG/PSGL1 and PODXL2 and mediates neutrophil adhesion and leukocyte rolling. This interaction requires the sialyl-Lewis X epitope of SELPLG and PODXL2, and specific tyrosine sulfation on SELPLG. Interacts (via C-type lectin domain) with alpha-IIb/beta3 integrin ITGA2B:ITGB3 and alpha-V/beta-3 integrin ITGAV:ITGB3. Interacts with alpha5/beta1 integrin ITGA5:ITGB1 and alpha4/beta1 integrin ITGA4:ITGB. In terms of tissue distribution, stored in the alpha-granules of platelets and Weibel-Palade bodies of endothelial cells. Upon cell activation by agonists, P-selectin is transported rapidly to the cell surface.

The protein localises to the cell membrane. Ca(2+)-dependent receptor for myeloid cells that binds to carbohydrates on neutrophils and monocytes. Mediates the interaction of activated endothelial cells or platelets with leukocytes. The ligand recognized is sialyl-Lewis X. Mediates rapid rolling of leukocyte rolling over vascular surfaces during the initial steps in inflammation through interaction with SELPLG. Mediates cell-cell interactions and cell adhesion via the interaction with integrin alpha-IIb/beta3 (ITGA2B:ITGB3) and integrin alpha-V/beta-3 (ITGAV:ITGB3). In Bos taurus (Bovine), this protein is P-selectin (SELP).